A 300-amino-acid polypeptide reads, in one-letter code: Tyrosine recombinase XerC (300 aa).

Positions 2–88 (TQEGQLEKRF…SLRSFYTFLL (87 aa)) constitute a Core-binding (CB) domain. Positions 109-294 (RLPKFFYSEE…TKEHLKSTYM (186 aa)) constitute a Tyr recombinase domain. Active-site residues include Arg150, Lys174, His246, Arg249, and His272. The O-(3'-phospho-DNA)-tyrosine intermediate role is filled by Tyr281.

It belongs to the 'phage' integrase family. XerC subfamily. Forms a cyclic heterotetrameric complex composed of two molecules of XerC and two molecules of XerD.

The protein localises to the cytoplasm. Functionally, site-specific tyrosine recombinase, which acts by catalyzing the cutting and rejoining of the recombining DNA molecules. The XerC-XerD complex is essential to convert dimers of the bacterial chromosome into monomers to permit their segregation at cell division. It also contributes to the segregational stability of plasmids. This chain is Tyrosine recombinase XerC, found in Listeria innocua serovar 6a (strain ATCC BAA-680 / CLIP 11262).